The sequence spans 218 residues: Heart- and neural crest derivatives-expressed protein 1 (218 aa).

Disordered stretches follow at residues 1–23 (MNLVGSYAHHHHHHHHHHPHPAH), 56–112 (APDF…RTES), and 172–203 (ADGGRESKRKRELQQHEGFPPALGPGEKRIKG). Over residues 8–21 (AHHHHHHHHHHPHP) the composition is skewed to basic residues. Residues 68–92 (AAAAAASYGPDARPGQSPGRLEALG) show a composition bias toward low complexity. The segment covering 95–107 (LGRRKGSGPKKER) has biased composition (basic residues). The region spanning 97 to 149 (RRKGSGPKKERRRTESINSAFAELRECIPNVPADTKLSKIKTLRLATSYIAYL) is the bHLH domain. The residue at position 110 (threonine 110) is a Phosphothreonine; by PLK4. Serine 112 carries the phosphoserine; by PLK4 modification.

Efficient DNA binding requires dimerization with another bHLH protein. Forms homodimers and heterodimers with TCF3 gene products E12 and E47, HAND2 and HEY1, HEY2 and HEYL (hairy-related transcription factors). Interacts with MDFIC. Interacts with SOX15; the interaction enhances HAND1-induced differentiation of trophoblast giant cells. Post-translationally, phosphorylation by PLK4 disrupts the interaction with MDFIC and leads to translocation into the nucleoplasm, allowing dimerization and transcription factor activity.

It is found in the nucleus. Its subcellular location is the nucleoplasm. The protein resides in the nucleolus. Functionally, transcription factor that plays an essential role in both trophoblast giant cell differentiation and in cardiac morphogenesis. Binds the DNA sequence 5'-NRTCTG-3' (non-canonical E-box). Acts as a transcriptional repressor of SOX15. In the adult, could be required for ongoing expression of cardiac-specific genes. The protein is Heart- and neural crest derivatives-expressed protein 1 (HAND1) of Bos taurus (Bovine).